We begin with the raw amino-acid sequence, 407 residues long: Cytochrome P450 NovI (407 aa).

Cys-357 is a heme binding site.

It belongs to the cytochrome P450 family. The cofactor is heme.

It participates in antibiotic biosynthesis; novobiocin biosynthesis. In terms of biological role, together with NovH, involved in the formation of a beta-OH-Tyr intermediate in the novobiocin biosynthesis pathway, an aminocoumarin family antibiotic that targets bacterial DNA gyrases. Acts as a cytochrome P450-type monooxygenase with specificity for the tyrosyl-S-NovH acyl enzyme (L-Tyr-S-NovH) to form the beta-OH-Tyr intermediate (L-beta-OH-Tyr-S-NovH). This is Cytochrome P450 NovI (novI) from Streptomyces niveus (Streptomyces spheroides).